A 91-amino-acid chain; its full sequence is MPSTPEEKKKVLTRVRRIRGQIDALERSLEGDAECRAILQQIAAVRGAANGLMAEVLESHIRETFDRNDCYSREVSQSVDDTIELVRAYLK.

This sequence belongs to the FrmR/RcnR family. In terms of assembly, homotetramer.

It localises to the cytoplasm. Functionally, formaldehyde sensor. In the absence of formaldehyde, mediates repression of the frmRAB operon. Acts by binding directly to the frmRAB promoter region. In the presence of formaldehyde, it dissociates from the frmRAB promoter region and allows expression of the formaldehyde detoxification system encoded by frmA and frmB. This is Transcriptional repressor FrmR from Escherichia coli (strain UTI89 / UPEC).